We begin with the raw amino-acid sequence, 628 residues long: E3 SUMO-protein ligase PIAS3 (628 aa).

The tract at residues 1–200 is interaction with CCAR2; that stretch reads MAELGELKHM…QLRFCLCETS (200 aa). The SAP domain maps to 11–45; sequence VMSFRVSELQVLLGFAGRNKSGRKHELLAKALHLL. An LXXLL motif motif is present at residues 19–23; it reads LQVLL. Glycyl lysine isopeptide (Lys-Gly) (interchain with G-Cter in SUMO2) cross-links involve residues K46, K56, K230, and K307. The PINIT domain occupies 115–280; sequence MHPPLPQPVH…SLSVYLVRQL (166 aa). Residues 312 to 393 form an SP-RING-type zinc finger; sequence PDSEVATTSL…FMEILSSCSD (82 aa). Zn(2+)-binding residues include C343, H345, C366, and C369. The segment at 450–460 is SUMO1-binding; sequence LTIESSSDEED. Residues K466 and K482 each participate in a glycyl lysine isopeptide (Lys-Gly) (interchain with G-Cter in SUMO2) cross-link. The tract at residues 597–617 is disordered; sequence VAPGGALREGHGGPLPSGPSL.

It belongs to the PIAS family. As to quaternary structure, monomer. Binds SUMO1 and UBE2I. Interacts with BCL11A, HMGA2, IRF1, MITF and NCOA2. Interacts with STAT5; the interaction occurs on stimulation by PRL. Interacts with GFI1; the interaction relieves the inhibitory effect of PIAS3 on STAT3-mediated transcriptional activity. Interacts with AR, PLAG1 and ZFHX3. Interacts with STAT3; the interaction occurs on stimulation by IL6, CNTF or OSM and inhibits the DNA binding activity of STAT3. Interacts with MTA1. Interacts with CCAR2 (via N-terminus). Interacts with TRIM8. Interacts with PRDM1/Blimp-1. In terms of processing, sumoylated. As to expression, widely expressed.

The protein resides in the cytoplasm. The protein localises to the nucleus. Its subcellular location is the nucleus speckle. The protein operates within protein modification; protein sumoylation. Functionally, functions as an E3-type small ubiquitin-like modifier (SUMO) ligase, stabilizing the interaction between UBE2I and the substrate, and as a SUMO-tethering factor. Plays a crucial role as a transcriptional coregulation in various cellular pathways, including the STAT pathway and the steroid hormone signaling pathway. Involved in regulating STAT3 signaling via inhibiting STAT3 DNA-binding and suppressing cell growth. Enhances the sumoylation of MTA1 and may participate in its paralog-selective sumoylation. Sumoylates CCAR2 which promotes its interaction with SIRT1. Diminishes the sumoylation of ZFHX3 by preventing the colocalization of ZFHX3 with SUMO1 in the nucleus. The chain is E3 SUMO-protein ligase PIAS3 (PIAS3) from Homo sapiens (Human).